The primary structure comprises 350 residues: MPIKTRVLVVDDSALMRGLLSQMINLAPDMEVVGAAPDAQSAREMIKVLNPDVLTLDVQMPKMDGLEFLERLMRLRPMPVVMVSSFTEAGSDTTLKALELGAIDFIGKPRADGGRSVENYAEELVEKIRAAKAARLRRAMTGNSVRAATPASASPKSGLGASGKIIFVGASTGGTEAIKDFLLGIPADCPPILIVQHMPEAFTASFARRLDSLCAPRIIEAKGNEKVEPGTIYVAPGHSHLLIRRGTAGFLTELAATPPVNRHRPAVDVLFDSAATLVGRKAIGVILTGMGKDGAQGLLRMRQAGARTFGQDESSCVVYGMPREAFLIGAVEEQCSLDEMARRVLGAVSA.

The region spanning 6–123 (RVLVVDDSAL…GRSVENYAEE (118 aa)) is the Response regulatory domain. Asp-57 carries the post-translational modification 4-aspartylphosphate. Residues 159–350 (LGASGKIIFV…ARRVLGAVSA (192 aa)) form the CheB-type methylesterase domain. Catalysis depends on residues Ser-171, His-197, and Asp-293.

Belongs to the CheB family. Post-translationally, phosphorylated by CheA. Phosphorylation of the N-terminal regulatory domain activates the methylesterase activity.

It is found in the cytoplasm. It catalyses the reaction [protein]-L-glutamate 5-O-methyl ester + H2O = L-glutamyl-[protein] + methanol + H(+). It carries out the reaction L-glutaminyl-[protein] + H2O = L-glutamyl-[protein] + NH4(+). Its function is as follows. Involved in chemotaxis. Part of a chemotaxis signal transduction system that modulates chemotaxis in response to various stimuli. Catalyzes the demethylation of specific methylglutamate residues introduced into the chemoreceptors (methyl-accepting chemotaxis proteins or MCP) by CheR. Also mediates the irreversible deamidation of specific glutamine residues to glutamic acid. The sequence is that of Protein-glutamate methylesterase/protein-glutamine glutaminase 1 from Dechloromonas aromatica (strain RCB).